Reading from the N-terminus, the 308-residue chain is Tyrosine recombinase XerD (308 aa).

Residues 3-89 (NGFTRLTEQF…SIHEFHRFAL (87 aa)) form the Core-binding (CB) domain. The Tyr recombinase domain occupies 110-301 (TLPDVLTVDE…SPETLIETYL (192 aa)). Catalysis depends on residues R153, K177, H253, R256, and H279. The active-site O-(3'-phospho-DNA)-tyrosine intermediate is the Y288.

It belongs to the 'phage' integrase family. XerD subfamily. Forms a cyclic heterotetrameric complex composed of two molecules of XerC and two molecules of XerD.

The protein localises to the cytoplasm. Its function is as follows. Site-specific tyrosine recombinase, which acts by catalyzing the cutting and rejoining of the recombining DNA molecules. The XerC-XerD complex is essential to convert dimers of the bacterial chromosome into monomers to permit their segregation at cell division. It also contributes to the segregational stability of plasmids. The chain is Tyrosine recombinase XerD from Bifidobacterium longum (strain NCC 2705).